The following is a 377-amino-acid chain: Membrane progestin receptor epsilon (377 aa).

The disordered stretch occupies residues 1–40 (MPRRLQPRGAGTKGPPAPAPAASGAARNSHSAASRDPPAS). Topologically, residues 1–86 (MPRRLQPRGA…VLKPTNETLN (86 aa)) are cytoplasmic. Over residues 9-26 (GAGTKGPPAPAPAASGAA) the composition is skewed to low complexity. The helical transmembrane segment at 87–107 (FWTHFIPLLLFLSKFCRLFFL) threads the bilayer. Residues 108–116 (SGGDVPFHH) lie on the Extracellular side of the membrane. Residues 117–137 (PWLLPLWCYASGVLLTFAMSC) traverse the membrane as a helical segment. The Cytoplasmic portion of the chain corresponds to 138–162 (TAHVFSCLSLRLRAAFFYLDYASIS). A helical transmembrane segment spans residues 163–183 (YYGFGSTVAYYYYLLPGLSLL). Residues 184-205 (DARVMTPYLQQRLGWHVDCTRL) are Extracellular-facing. Residues 206–226 (IAAYRALVLPVAFVLAVACTV) form a helical membrane-spanning segment. Over 227–243 (ACCKSRTDWCTYPFALR) the chain is Cytoplasmic. The chain crosses the membrane as a helical span at residues 244 to 264 (TFVFVMPLSMACPIMLESWLF). Topologically, residues 265–301 (DLRGENPTLFVHFYRRYFWLVVAAFFNVSKIPERIQP) are extracellular. The helical transmembrane segment at 302 to 322 (GLFDIIGHSHQLFHIFTFLSI) threads the bilayer. Residues 323 to 343 (YDQVYYVEEGLRQFLQAPPAA) are Cytoplasmic-facing. Residues 344–364 (PTFSGTVGYMLLLVVCLGLVI) traverse the membrane as a helical segment. Over 365-377 (RKFLNSSEFCSKK) the chain is Extracellular.

This sequence belongs to the ADIPOR family. Homodimer. As to expression, expression levels vary widely in a range of tissues. Expressed in the brain, at high level in the pituitary gland and also in hypothalamus, limbic system, caudate nucleus accumens, pons and olfactory bulb.

Its subcellular location is the cell membrane. Functionally, plasma membrane progesterone (P4) receptor coupled to G proteins. Seems to act through a G(s) mediated pathway. May be involved in regulating rapid P4 signaling in the nervous system. Also binds dehydroepiandrosterone (DHEA), pregnanolone, pregnenolone and allopregnanolone. The sequence is that of Membrane progestin receptor epsilon from Homo sapiens (Human).